Here is a 145-residue protein sequence, read N- to C-terminus: D-aminoacyl-tRNA deacylase (145 aa).

A Gly-cisPro motif, important for rejection of L-amino acids motif is present at residues 137–138 (GP).

Belongs to the DTD family. Homodimer.

It localises to the cytoplasm. The catalysed reaction is glycyl-tRNA(Ala) + H2O = tRNA(Ala) + glycine + H(+). It catalyses the reaction a D-aminoacyl-tRNA + H2O = a tRNA + a D-alpha-amino acid + H(+). In terms of biological role, an aminoacyl-tRNA editing enzyme that deacylates mischarged D-aminoacyl-tRNAs. Also deacylates mischarged glycyl-tRNA(Ala), protecting cells against glycine mischarging by AlaRS. Acts via tRNA-based rather than protein-based catalysis; rejects L-amino acids rather than detecting D-amino acids in the active site. By recycling D-aminoacyl-tRNA to D-amino acids and free tRNA molecules, this enzyme counteracts the toxicity associated with the formation of D-aminoacyl-tRNA entities in vivo and helps enforce protein L-homochirality. This chain is D-aminoacyl-tRNA deacylase, found in Salmonella arizonae (strain ATCC BAA-731 / CDC346-86 / RSK2980).